A 366-amino-acid polypeptide reads, in one-letter code: MEQLDQQQAETLSAIAQAATPEAVEAIRVSALGKQGWVSALLKSLGGMTPEQRQSEGPKIHAAREAVTTALAERKSALEGAALEARLAAETVDLSLPAPDLAKGSVHPVSQVMDELAEIFADMGFAVASGPEIEDDWHNFTALNMPETHPARAMHDTFYFPDKDAEGRSMLLRTHTSPVQIRSMLKAGAPLRIIAPGRVYRSDSDATHTPMFHQIEGLVIDKGIHLGHLKWTLETFLKAFFERDDIVLRLRPSYFPFTEPSVEVDVGYTLVNGKRVVGGSGDADNGGWMEVLGSGMVNRKVIEFGGLDPDEWQGFAFGTGVDRLAMLKYGMDDLRAFFDGDARWLGHYGFGALDVPTLSGGVGVRS.

Glutamate 259 provides a ligand contact to Mg(2+).

The protein belongs to the class-II aminoacyl-tRNA synthetase family. Phe-tRNA synthetase alpha subunit type 1 subfamily. In terms of assembly, tetramer of two alpha and two beta subunits. Mg(2+) serves as cofactor.

The protein localises to the cytoplasm. It catalyses the reaction tRNA(Phe) + L-phenylalanine + ATP = L-phenylalanyl-tRNA(Phe) + AMP + diphosphate + H(+). The polypeptide is Phenylalanine--tRNA ligase alpha subunit (Novosphingobium aromaticivorans (strain ATCC 700278 / DSM 12444 / CCUG 56034 / CIP 105152 / NBRC 16084 / F199)).